A 227-amino-acid chain; its full sequence is 2-phospho-L-lactate guanylyltransferase (227 aa).

This sequence belongs to the CofC family. As to quaternary structure, homodimer.

The catalysed reaction is (2S)-2-phospholactate + GTP + H(+) = (2S)-lactyl-2-diphospho-5'-guanosine + diphosphate. Its pathway is cofactor biosynthesis; coenzyme F420 biosynthesis. Its function is as follows. Guanylyltransferase that catalyzes the activation of (2S)-2-phospholactate (2-PL) as (2S)-lactyl-2-diphospho-5'-guanosine, via the condensation of 2-PL with GTP. It is involved in the biosynthesis of coenzyme F420, a hydride carrier cofactor. This chain is 2-phospho-L-lactate guanylyltransferase, found in Methanocaldococcus sp. (strain FS406-22).